The sequence spans 482 residues: MSSVKRRKTEKNTSSGLKSKQAKEPKEASPLSSPEPTEENQNNEIEEGTEEEEVTKSFKDLGIVDSLCEACDTLGYKAPTPIQRESIPLALQGRDLIGLAETGSGKTAAFALPILQSLLDKPQPLFGLVLAPTRELAYQISQSFEALGSIIRVKCAVIVGGMDMVPQAIALGKKPHIIVATPGRLLDHLENTKGFSLRSLKYLVMDEADRLLDLDFGPILDKILKVLPRERRTYLFSATISSKVESLQRASLKDPLRVSISSNKYQTVSTLIQNYIFIPLVHKDTYLIYLLNEFAGQSAIIFTRTVNETQRIAILLRTLGFGAIPLHGQLSQSSRLGALNKFRAGSREILVATDVAARGLDIPSVDVVLNYDMPQDSKTYIHRVGRTARAGKSGHAISFVTQYDVEIWMRIEAALGKKQEEYQTVKDEVMVFKPRVEEAQRHARNEMKNLHEDRGKKGAVLKGRRPANGAKRGRDEMDREEG.

Positions 1-55 are disordered; that stretch reads MSSVKRRKTEKNTSSGLKSKQAKEPKEASPLSSPEPTEENQNNEIEEGTEEEEVT. Residues 44–53 are compositionally biased toward acidic residues; that stretch reads EIEEGTEEEE. Positions 56 to 84 match the Q motif motif; the sequence is KSFKDLGIVDSLCEACDTLGYKAPTPIQR. Residues 87 to 258 enclose the Helicase ATP-binding domain; that stretch reads IPLALQGRDL…RASLKDPLRV (172 aa). 100–107 lines the ATP pocket; the sequence is AETGSGKT. The short motif at 206 to 209 is the DEAD box element; the sequence is DEAD. The 149-residue stretch at 282-430 folds into the Helicase C-terminal domain; it reads HKDTYLIYLL…EYQTVKDEVM (149 aa). Composition is skewed to basic and acidic residues over residues 444-456 and 472-482; these read RNEMKNLHEDRGK and RGRDEMDREEG. A disordered region spans residues 444 to 482; sequence RNEMKNLHEDRGKKGAVLKGRRPANGAKRGRDEMDREEG.

The protein belongs to the DEAD box helicase family. DDX47/RRP3 subfamily. Interacts with the SSU processome.

It localises to the nucleus. The enzyme catalyses ATP + H2O = ADP + phosphate + H(+). Its function is as follows. ATP-dependent rRNA helicase required for pre-ribosomal RNA processing. Involved in the maturation of the 35S-pre-rRNA and to its cleavage to mature 18S rRNA. The sequence is that of ATP-dependent rRNA helicase rrp3 from Sclerotinia sclerotiorum (strain ATCC 18683 / 1980 / Ss-1) (White mold).